The chain runs to 2170 residues: ATP-binding cassette sub-family A member 7 (2170 aa).

Residues 22-42 form a helical membrane-spanning segment; the sequence is PIQLVVELLWPLFLFFILVAV. Residues 43-547 are Extracellular-facing; the sequence is RHSHPPLEHH…DVFLRVLSRS (505 aa). Cysteines 75 and 222 form a disulfide. Asparagine 309 carries N-linked (GlcNAc...) asparagine glycosylation. 6 helical membrane-spanning segments follow: residues 548 to 568, 591 to 611, 624 to 644, 653 to 673, 679 to 699, and 733 to 753; these read LPLF…KAVV, LGWF…LVLV, VVVF…SFLL, LAAA…VLCV, LPLG…GFGC, and AFLL…EAVC. An ABC transporter 1 domain is found at 805-1036; it reads VSIRGLKKHF…LGCGYYLTLV (232 aa). 839–846 is an ATP binding site; sequence GHNGAGKT. The helical transmembrane segment at 847-867 threads the bilayer; the sequence is TTLSILSGLFPPSSGSASILG. Residues 1044-1086 are disordered; sequence THDLKGDTEDPRREKKSGSEGKTADTVLTRDGPHRSSQVPAPD. Residues 1045–1066 are compositionally biased toward basic and acidic residues; that stretch reads HDLKGDTEDPRREKKSGSEGKT. The helical transmembrane segment at 1257 to 1277 threads the bilayer; the sequence is IVLPALFVGLALFFTLIVPPF. The Extracellular portion of the chain corresponds to 1278-1562; sequence GQYPPLQLSP…TLIASSVDVL (285 aa). Cysteine 1370 and cysteine 1384 are disulfide-bonded. 6 consecutive transmembrane segments (helical) span residues 1563–1583, 1609–1629, 1646–1666, 1674–1694, 1708–1728, and 1754–1774; these read VSIC…LVLI, FLWD…IFLA, LLLL…SFFF, VVLT…TFVL, ILKQ…LIDM, and IIGK…LITL. The ABC transporter 2 domain occupies 1818 to 2050; it reads LVLRDLTKVY…FGAGHTLTLR (233 aa). An ATP-binding site is contributed by 1852-1859; the sequence is GVNGAGKT. Positions 2129–2170 are disordered; sequence QGEEEEGSGQETETREVSTPGLQHPKRVSRFLEDPSSVETVI.

Belongs to the ABC transporter superfamily. ABCA family. In terms of processing, N-glycosylated. As to expression, expressed in blood cells. Also detected in brain and ovary tissues (at protein level). Expressed in platelet.

The protein resides in the cell membrane. Its subcellular location is the golgi apparatus membrane. It localises to the early endosome membrane. The protein localises to the cell projection. It is found in the ruffle membrane. The protein resides in the phagocytic cup. Its subcellular location is the cytoplasm. Its function is as follows. ATP-binding cassette (ABC) transporter that plays a role in lipid homeostasis and macrophage-mediated phagocytosis. Binds APOA1 and may function in apolipoprotein-mediated phospholipid efflux from cells. May also mediate cholesterol efflux. May regulate cellular ceramide homeostasis during keratinocyte differentiation. Involved in lipid raft organization and CD1D localization on thymocytes and antigen-presenting cells, which plays an important role in natural killer T-cell development and activation. Plays a role in phagocytosis of apoptotic cells by macrophages. Macrophage phagocytosis is stimulated by APOA1 or APOA2, probably by stabilization of ABCA7. Also involved in phagocytic clearance of amyloid-beta by microglia cells and macrophages. Further limits amyloid-beta production by playing a role in the regulation of amyloid-beta A4 precursor protein (APP) endocytosis and/or processing. The sequence is that of ATP-binding cassette sub-family A member 7 (Abca7) from Rattus norvegicus (Rat).